The following is a 314-amino-acid chain: Probable tRNA pseudouridine synthase B (314 aa).

Basic residues predominate over residues 1–10; it reads MATRGRHRSR. Positions 1–30 are disordered; the sequence is MATRGRHRSRTSGTSSEPMTLRAPPDERDL. Residue Asp-72 is the Nucleophile of the active site. The region spanning 237–314 is the PUA domain; it reads LPRVTIAPSA…LVVELDRMLV (78 aa).

Belongs to the pseudouridine synthase TruB family. Type 2 subfamily.

It catalyses the reaction uridine(55) in tRNA = pseudouridine(55) in tRNA. Its function is as follows. Could be responsible for synthesis of pseudouridine from uracil-55 in the psi GC loop of transfer RNAs. This Haloarcula marismortui (strain ATCC 43049 / DSM 3752 / JCM 8966 / VKM B-1809) (Halobacterium marismortui) protein is Probable tRNA pseudouridine synthase B.